Here is a 547-residue protein sequence, read N- to C-terminus: Chorismate synthase (547 aa).

Active-site residues include histidine 17, histidine 104, and aspartate 500.

It belongs to the chorismate synthase family.

The protein resides in the cytoplasm. Its subcellular location is the cytosol. The catalysed reaction is 5-O-(1-carboxyvinyl)-3-phosphoshikimate = chorismate + phosphate. The enzyme catalyses FMNH2 + NADP(+) = FMN + NADPH + 2 H(+). Its pathway is metabolic intermediate biosynthesis; chorismate biosynthesis; chorismate from D-erythrose 4-phosphate and phosphoenolpyruvate: step 7/7. Bifunctional chorismate synthase and flavin reductase. Catalyzes the conversion of 5-enolpyruvylshikimate 3-phosphate (EPSP) to form chorismate. Acts also as a flavin reductase (FR) able to generate reduced flavin mononucleotide in the presence of NADPH. This chain is Chorismate synthase, found in Plasmodium vivax (strain Salvador I).